The primary structure comprises 266 residues: Bidirectional sugar transporter SWEET7b (266 aa).

The Extracellular portion of the chain corresponds to 1-9; it reads MVSPDLIRN. The chain crosses the membrane as a helical span at residues 10-30; that stretch reads MVGIVGNIISFGLFLSPVPTF. The region spanning 10–97 is the MtN3/slv 1 domain; that stretch reads MVGIVGNIIS…TIFFLFSDKK (88 aa). Over 31–45 the chain is Cytoplasmic; it reads YRIIKNKDVQDFKAD. The chain crosses the membrane as a helical span at residues 46 to 66; the sequence is PYLATLLNCMLWVFYGLPIVH. The Extracellular segment spans residues 67 to 69; the sequence is PNS. The helical transmembrane segment at 70 to 90 threads the bilayer; that stretch reads ILVVTINGIGLIIEAVYLTIF. Residues 91–101 are Cytoplasmic-facing; that stretch reads FLFSDKKNKKK. Residues 102-122 form a helical membrane-spanning segment; the sequence is MGVVLATEALFMAAVVLGVLL. Residues 123–131 are Extracellular-facing; sequence GAHTHQRRS. The chain crosses the membrane as a helical span at residues 132–152; it reads LIVGILCAIFGTIMYSSPLTI. The region spanning 133 to 216 is the MtN3/slv 2 domain; sequence IVGILCAIFG…LILYAIYYRT (84 aa). Residues 153–165 lie on the Cytoplasmic side of the membrane; the sequence is MSQVVKTKSVEYM. The helical transmembrane segment at 166-186 threads the bilayer; sequence PLLLSVVSFLNGLCWTSYALI. Over 187–189 the chain is Extracellular; it reads RLD. Residues 190 to 210 form a helical membrane-spanning segment; sequence IFITIPNGLGVLFALMQLILY. Residues 211-266 lie on the Cytoplasmic side of the membrane; that stretch reads AIYYRTTPKKQDKNLELPTVAPVAKDTSIVTPVSKDDDVVDGGNASHVTINITIEP.

Belongs to the SWEET sugar transporter family. In terms of assembly, forms homooligomers and/or heterooligomers.

The protein localises to the cell membrane. Its function is as follows. Mediates both low-affinity uptake and efflux of sugar across the plasma membrane. This chain is Bidirectional sugar transporter SWEET7b (SWEET7B), found in Oryza sativa subsp. indica (Rice).